The sequence spans 71 residues: MPHVRVKENEPFEVALRRFKRTCEKAGVLTEVRRREFYEKPTEIRKRKAAAAVKRQAKRVSKEVARRERLY.

Belongs to the bacterial ribosomal protein bS21 family.

This chain is Small ribosomal subunit protein bS21, found in Thioalkalivibrio sulfidiphilus (strain HL-EbGR7).